The following is a 141-amino-acid chain: Hemoglobin subunit beta-C (141 aa).

Residues 1–141 (PNKALITGFW…VASALAHRYH (141 aa)) enclose the Globin domain. 2 residues coordinate heme b: His-58 and His-87.

This sequence belongs to the globin family. Heterotetramer of two alpha chains and two beta chains. Red blood cells.

Its function is as follows. Involved in oxygen transport from the lung to the various peripheral tissues. The chain is Hemoglobin subunit beta-C from Ammotragus lervia (Barbary sheep).